The sequence spans 122 residues: Vacuolar transporter chaperone complex subunit 1 (122 aa).

Residues 1–32 (MSTQPLLQTTPGKRIALPVRVEPKVFFANERT) lie on the Cytoplasmic side of the membrane. Residues 33 to 53 (FLSWLSFAVVLGGLSVGLLNF) form a helical membrane-spanning segment. At 54 to 59 (GDRIGK) the chain is on the vacuolar side. The helical transmembrane segment at 60-80 (ISAGLFTIVAIGTMGYALGIY) threads the bilayer. At 81–101 (HWRASAIRRRGSGPYDDRLGP) the chain is on the cytoplasmic side. Residues 102–122 (TILCFVLLAAIITNFVLRMLF) traverse the membrane as a helical segment.

Belongs to the VTC1 family. As to quaternary structure, the VTC core complex is an integral membrane heterooligomer composed of at least the catalytic subunit vtc4 and the accessory subunits vtc1 and vtc2. vtc1 is a small membrane protein without hydrophilic domain. Vtc2 and vtc4 are related and have 2 hydrophilic domains that face the cytosol, an N-terminal SPX domain and the central core domain. The central core in vtc4 is the catalytic domain. Vtc1 interacts with GTP-bound Ras-like cdc42, which is subsequently inactivated.

The protein localises to the vacuole membrane. Functionally, accessory subunit of the vacuolar transporter chaperone (VTC) complex. The VTC complex acts as a vacuolar polyphosphate polymerase that catalyzes the synthesis of inorganic polyphosphate (polyP) via transfer of phosphate from ATP to a growing polyP chain, releasing ADP. VTC exposes its catalytic domain vtc4 to the cytosol, where the growing polyP chain winds through a tunnel-shaped pocket, integrating cytoplasmic polymer synthesis with polyP membrane translocation. The VTC complex carries 9 vacuolar transmembrane domains, which are likely to constitute the translocation channel into the organelle lumen. PolyP synthesis is tightly coupled to its transport into the vacuole lumen, in order to avoid otherwise toxic intermediates in the cytosol, and it depends on the proton gradient across the membrane, formed by V-ATPase. Vtc1 contributes only 3 transmembrane domains to the complex. The VTC complex also plays a role in vacuolar membrane fusion. Involved in the control of cell polarity. The chain is Vacuolar transporter chaperone complex subunit 1 from Schizosaccharomyces pombe (strain 972 / ATCC 24843) (Fission yeast).